The following is a 696-amino-acid chain: DNA-directed RNA polymerase subunit beta' (696 aa).

Residues Cys-69, Cys-71, Cys-87, and Cys-90 each coordinate Zn(2+). Mg(2+)-binding residues include Asp-504, Asp-506, and Asp-508.

Belongs to the RNA polymerase beta' chain family. RpoC1 subfamily. In plastids the minimal PEP RNA polymerase catalytic core is composed of four subunits: alpha, beta, beta', and beta''. When a (nuclear-encoded) sigma factor is associated with the core the holoenzyme is formed, which can initiate transcription. Mg(2+) is required as a cofactor. Zn(2+) serves as cofactor.

It localises to the plastid. The protein localises to the chloroplast. It catalyses the reaction RNA(n) + a ribonucleoside 5'-triphosphate = RNA(n+1) + diphosphate. Functionally, DNA-dependent RNA polymerase catalyzes the transcription of DNA into RNA using the four ribonucleoside triphosphates as substrates. The chain is DNA-directed RNA polymerase subunit beta' from Pinus koraiensis (Korean pine).